We begin with the raw amino-acid sequence, 334 residues long: Endochitinase 3 (334 aa).

The signal sequence occupies residues 1–23; it reads MRLLEFTALSSLLVLFLLLAVSA. One can recognise a Chitin-binding type-1 domain in the interval 24 to 65; the sequence is EQCGKQAGGARCPSGMCCSNFGWCGNTQDYCGPGKCQSQCPS. 4 disulfides stabilise this stretch: C26-C41, C35-C47, C40-C54, and C59-C63. Residues 64-84 form a disordered region; the sequence is PSGPGPTPRPPTPTPGPSTGD. Pro residues predominate over residues 66-79; that stretch reads GPGPTPRPPTPTPG. P73, P74, and P76 each carry 4-hydroxyproline. Intrachain disulfides connect C106–C168, C180–C188, and C287–C319. The Proton donor role is filled by E150. The propeptide at 328–334 is removed in mature form; the sequence is GLLLETM.

This sequence belongs to the glycosyl hydrolase 19 family. Chitinase class I subfamily. Post-translationally, the 4-hydroxyproline residues are not glycosylated in this plant vacuolar protein.

It localises to the vacuole. It carries out the reaction Random endo-hydrolysis of N-acetyl-beta-D-glucosaminide (1-&gt;4)-beta-linkages in chitin and chitodextrins.. Defense against chitin-containing fungal pathogens. This is Endochitinase 3 (CHN14) from Nicotiana tabacum (Common tobacco).